A 193-amino-acid chain; its full sequence is Proton-translocating ferredoxin:NAD(+) oxidoreductase complex subunit A (193 aa).

6 helical membrane-spanning segments follow: residues 11-31, 39-59, 62-82, 102-122, 134-154, and 171-191; these read AVVVNNYVLTRFLGLCIFFGV, VGMGMAVTSVITMSSILAWVV, FVLIPFNLTFLKTVVFVLLIA, MWGIYLLLIATNCIVLAVPIL, VVNAIGSGLGFAMAIILMASL, and GVAFILAGMLALAFLGFSGMI.

It belongs to the NqrDE/RnfAE family. In terms of assembly, the complex is composed of six subunits: RnfA, RnfB, RnfC, RnfD, RnfE and RnfG.

It is found in the cell membrane. Part of a membrane-bound complex that couples electron transfer with translocation of ions across the membrane. Couples electron transfer from reduced ferredoxin to NAD(+) with translocation of H(+) out of the cell. Essential for energy conservation during autotrophic growth. Contributes to ATP synthesis during heterotrophic growth. The protein is Proton-translocating ferredoxin:NAD(+) oxidoreductase complex subunit A of Clostridium ljungdahlii (strain ATCC 55383 / DSM 13528 / PETC).